The primary structure comprises 259 residues: Putative zinc metalloprotease Rip2 (259 aa).

2 helical membrane passes run 14 to 34 (PIFLGLLGLTAVGGALAWLAG) and 39 to 59 (PLAYAGVFVMVIAGWLVSLCL). Position 60 (His60) interacts with Zn(2+). Residue Glu61 is part of the active site. A Zn(2+)-binding site is contributed by His64. The next 4 helical transmembrane spans lie at 97–117 (GLPMLFIALGGIGLPGAAVYV), 128–148 (TLVSLAGPTVNLALAMLLLAA), 156–176 (IHAVLWAGVAFLAFLQLTALV), and 211–231 (LVFLLVLFLAPTLNGWFFGVV).

The protein belongs to the peptidase M50B family. Requires Zn(2+) as cofactor.

The protein localises to the cell membrane. This chain is Putative zinc metalloprotease Rip2 (rip2), found in Mycobacterium tuberculosis (strain ATCC 25618 / H37Rv).